A 409-amino-acid polypeptide reads, in one-letter code: Peptidase T (409 aa).

His-78 lines the Zn(2+) pocket. Asp-80 is an active-site residue. Asp-140 lines the Zn(2+) pocket. Catalysis depends on Glu-173, which acts as the Proton acceptor. Zn(2+) is bound by residues Glu-174, Asp-196, and His-379.

It belongs to the peptidase M20B family. The cofactor is Zn(2+).

Its subcellular location is the cytoplasm. The catalysed reaction is Release of the N-terminal residue from a tripeptide.. Cleaves the N-terminal amino acid of tripeptides. This Salmonella heidelberg (strain SL476) protein is Peptidase T.